Here is a 156-residue protein sequence, read N- to C-terminus: Small ribosomal subunit protein uS7 (156 aa).

It belongs to the universal ribosomal protein uS7 family. In terms of assembly, part of the 30S ribosomal subunit. Contacts proteins S9 and S11.

One of the primary rRNA binding proteins, it binds directly to 16S rRNA where it nucleates assembly of the head domain of the 30S subunit. Is located at the subunit interface close to the decoding center, probably blocks exit of the E-site tRNA. The chain is Small ribosomal subunit protein uS7 from Syntrophotalea carbinolica (strain DSM 2380 / NBRC 103641 / GraBd1) (Pelobacter carbinolicus).